Here is an 80-residue protein sequence, read N- to C-terminus: Exodeoxyribonuclease 7 small subunit (80 aa).

It belongs to the XseB family. Heterooligomer composed of large and small subunits.

Its subcellular location is the cytoplasm. The catalysed reaction is Exonucleolytic cleavage in either 5'- to 3'- or 3'- to 5'-direction to yield nucleoside 5'-phosphates.. Its function is as follows. Bidirectionally degrades single-stranded DNA into large acid-insoluble oligonucleotides, which are then degraded further into small acid-soluble oligonucleotides. The protein is Exodeoxyribonuclease 7 small subunit of Rickettsia massiliae (strain Mtu5).